The following is a 546-amino-acid chain: Alpha-taxilin (546 aa).

Disordered stretches follow at residues 1–170 (MKNQ…GLGK) and 482–546 (NKRV…SARA). A compositionally biased stretch (polar residues) spans 11–21 (AKQSNPKSSPG). Composition is skewed to basic and acidic residues over residues 70–80 (DVSEELSRQLE) and 143–158 (EEIR…DHRR). Phosphoserine is present on Ser-72. Residues 186 to 491 (EEKLAALCKK…NKRVQDLSAG (306 aa)) are a coiled coil. Ser-515 carries the post-translational modification Phosphoserine. The segment covering 530–546 (TEASGQTGPQEPTSARA) has biased composition (polar residues).

The protein belongs to the taxilin family. Binds to the C-terminal coiled coil region of syntaxin family members STX1A, STX3A and STX4A, but not when these proteins are complexed with SNAP25, VAMP2 or STXBP1, suggesting that it interacts with syntaxins that do not form the SNARE complex. Ubiquitous, with much higher expression in heart, kidney, liver and pancreas.

May be involved in intracellular vesicle traffic and potentially in calcium-dependent exocytosis in neuroendocrine cells. This Homo sapiens (Human) protein is Alpha-taxilin (TXLNA).